The chain runs to 170 residues: Elicitin-like protein 1 (170 aa).

The signal sequence occupies residues 1 to 19; it reads MFSKTLVVLAAVAAVTVNG. Disulfide bonds link Cys25-Cys91, Cys47-Cys76, and Cys71-Cys118. A disordered region spans residues 122-170; it reads GGGSTPTTAPPTSTTPTTAPPTGTTPTTAPPAGTTPGVTPSPTTPKPAC. A compositionally biased stretch (low complexity) spans 126 to 162; sequence TPTTAPPTSTTPTTAPPTGTTPTTAPPAGTTPGVTPS.

This sequence belongs to the elicitin family.

The protein localises to the secreted. Its function is as follows. Induces local and distal defense responses (incompatible hypersensitive reaction) in plants from the solanaceae and cruciferae families. Elicits leaf necrosis and causes the accumulation of pathogenesis-related proteins. Might interact with the lipidic molecules of the plasma membrane. The chain is Elicitin-like protein 1 (POD-1) from Pythium oligandrum (Mycoparasitic fungus).